Here is a 599-residue protein sequence, read N- to C-terminus: Aspartate--tRNA(Asp/Asn) ligase (599 aa).

Position 172 (Glu-172) interacts with L-aspartate. The segment at 196 to 199 is aspartate; that stretch reads QLFK. Residue Arg-218 coordinates L-aspartate. Residues 218–220 and Gln-227 contribute to the ATP site; that span reads RDE. His-455 is an L-aspartate binding site. Residue Glu-489 participates in ATP binding. Arg-496 provides a ligand contact to L-aspartate. 541 to 544 contacts ATP; the sequence is GLDR.

This sequence belongs to the class-II aminoacyl-tRNA synthetase family. Type 1 subfamily. Homodimer.

It localises to the cytoplasm. The enzyme catalyses tRNA(Asx) + L-aspartate + ATP = L-aspartyl-tRNA(Asx) + AMP + diphosphate. In terms of biological role, aspartyl-tRNA synthetase with relaxed tRNA specificity since it is able to aspartylate not only its cognate tRNA(Asp) but also tRNA(Asn). Reaction proceeds in two steps: L-aspartate is first activated by ATP to form Asp-AMP and then transferred to the acceptor end of tRNA(Asp/Asn). The polypeptide is Aspartate--tRNA(Asp/Asn) ligase (Herminiimonas arsenicoxydans).